A 343-amino-acid polypeptide reads, in one-letter code: GTPase Obg (343 aa).

Positions 1–159 constitute an Obg domain; sequence MKFIDEVKIQ…FELRLELRVL (159 aa). One can recognise an OBG-type G domain in the interval 160 to 334; it reads ADVGLLGLPN…LIYAIMGHLQ (175 aa). GTP contacts are provided by residues 166–173, 191–195, 213–216, 284–287, and 315–317; these read GLPNAGKS, FTTLY, DIPG, NKVD, and SAL. Mg(2+)-binding residues include Ser173 and Thr193.

Belongs to the TRAFAC class OBG-HflX-like GTPase superfamily. OBG GTPase family. In terms of assembly, monomer. The cofactor is Mg(2+).

Its subcellular location is the cytoplasm. Functionally, an essential GTPase which binds GTP, GDP and possibly (p)ppGpp with moderate affinity, with high nucleotide exchange rates and a fairly low GTP hydrolysis rate. Plays a role in control of the cell cycle, stress response, ribosome biogenesis and in those bacteria that undergo differentiation, in morphogenesis control. The polypeptide is GTPase Obg (Nitrosomonas europaea (strain ATCC 19718 / CIP 103999 / KCTC 2705 / NBRC 14298)).